The sequence spans 97 residues: Large ribosomal subunit protein uL23 (97 aa).

It belongs to the universal ribosomal protein uL23 family. Part of the 50S ribosomal subunit. Contacts protein L29, and trigger factor when it is bound to the ribosome.

Functionally, one of the early assembly proteins it binds 23S rRNA. One of the proteins that surrounds the polypeptide exit tunnel on the outside of the ribosome. Forms the main docking site for trigger factor binding to the ribosome. The chain is Large ribosomal subunit protein uL23 from Brucella suis (strain ATCC 23445 / NCTC 10510).